We begin with the raw amino-acid sequence, 484 residues long: Iroquois-class homeodomain protein IRX-5 (484 aa).

A DNA-binding region (homeobox; TALE-type) is located at residues 112 to 174 (DPAYRKNATR…NARRRLKKEN (63 aa)). Disordered regions lie at residues 176–393 (MTWT…QCPF) and 424–443 (GHPGPGPSPTAGPGSHFNGL). Positions 185 to 202 (EDEEEEENIDLEKNDEDE) are enriched in acidic residues. Composition is skewed to basic and acidic residues over residues 203–212 (PQKPEDKGDL) and 249–265 (SDFKESSSEGRHDELPR). Phosphoserine is present on S273. Positions 318–328 (SPPPPPPPPPA) are enriched in pro residues. Over residues 375–389 (SRASPAPAPARSPSA) the composition is skewed to low complexity. At S465 the chain carries Phosphoserine.

The protein belongs to the TALE/IRO homeobox family. As to expression, not expressed in the developing metanephric kidney or adult kidney.

It is found in the nucleus. Functionally, establishes the cardiac repolarization gradient by its repressive actions on the KCND2 potassium-channel gene. Required for retinal cone bipolar cell differentiation. May regulate contrast adaptation in the retina and control specific aspects of visual function in circuits of the mammalian retina. Involved in craniofacial and gonadal development. Modulates the migration of progenitor cell populations in branchial arches and gonads by repressing CXCL12. The protein is Iroquois-class homeodomain protein IRX-5 (Irx5) of Mus musculus (Mouse).